We begin with the raw amino-acid sequence, 210 residues long: Large ribosomal subunit protein uL3 (210 aa).

The disordered stretch occupies residues 120-143; sequence FQGNIKKDGQSRGPMGHGSRYHRR.

It belongs to the universal ribosomal protein uL3 family. In terms of assembly, part of the 50S ribosomal subunit. Forms a cluster with proteins L14 and L19.

One of the primary rRNA binding proteins, it binds directly near the 3'-end of the 23S rRNA, where it nucleates assembly of the 50S subunit. The sequence is that of Large ribosomal subunit protein uL3 from Latilactobacillus sakei subsp. sakei (strain 23K) (Lactobacillus sakei subsp. sakei).